The sequence spans 419 residues: Synaptotagmin-1 (419 aa).

The Vesicular portion of the chain corresponds to 1-58 (MVSESHHEALAAPPVTTVATVLPSNATEPASPGEGKEDAFSKLKEKFMNELHKIPLPP). Residue Asn25 is glycosylated (N-linked (GlcNAc...) asparagine). Residues 59-80 (WALIAIAIVAVLLVLTCCFCIC) form a helical membrane-spanning segment. S-palmitoyl cysteine attachment occurs at residues Cys75, Cys76, Cys78, Cys80, and Cys83. Over 81–419 (KKCLFKKKNK…EVDAMLAVKK (339 aa)) the chain is Cytoplasmic. Residues 108–139 (KDLGKTMKDQDDDAETGLTDGEEKEEPKEEEK) are disordered. A compositionally biased stretch (acidic residues) spans 117 to 131 (QDDDAETGLTDGEEK). Thr126 is modified (phosphothreonine). The segment at 133 to 379 (EPKEEEKLGK…AIGKVFVGYN (247 aa)) is phospholipid binding. Positions 139-258 (KLGKLQYSLD…DFGHVTEEWR (120 aa)) constitute a C2 1 domain. Residues Leu169, Asp170, and Asp176 each coordinate Ca(2+). Tyr227 carries the post-translational modification Phosphotyrosine. Asp228, Phe229, Asp230, Ser233, Lys234, and Asp236 together coordinate Ca(2+). Ser262 bears the Phosphoserine mark. Residues 270–403 (KLGDICFSLR…NPRRPIAQWH (134 aa)) form the C2 2 domain. Ca(2+) contacts are provided by Asp301 and Asp307. A phosphoserine mark is found at Ser340 and Ser342. Residues Asp361, Asp363, and Asp369 each coordinate Ca(2+).

It belongs to the synaptotagmin family. In terms of assembly, homotetramer. Heterodimer; heterodimerizes with SYT2 in presence of calcium. Interacts with SCAMP5. Interacts with STON2. Forms a complex with SV2B, syntaxin 1 and SNAP25. Interacts with SV2A, SV2B and SV2C. Interacts with RIMS1. Interacts with PRRT2. Interacts with DNAJC5 in a phosphorylation-dependent manner. Interacts (via N-terminus) with RAB3A. Interacts with SYT12. Interacts with calmodulin. Interacts with DNM1 (via C-terminal proline-rich domain (PRD)); this interaction facilitates vesicle fission during clathrin-mediated endocytosis (CME). It depends on Ca(2+) as a cofactor. Post-translationally, glycosylated.

Its subcellular location is the cytoplasmic vesicle. The protein localises to the secretory vesicle membrane. The protein resides in the secretory vesicle. It localises to the synaptic vesicle membrane. It is found in the chromaffin granule membrane. Its subcellular location is the cytoplasm. Its function is as follows. Calcium sensor that participates in triggering neurotransmitter release at the synapse. May have a regulatory role in the membrane interactions during trafficking of synaptic vesicles at the active zone of the synapse. It binds acidic phospholipids with a specificity that requires the presence of both an acidic head group and a diacyl backbone. A Ca(2+)-dependent interaction between synaptotagmin and putative receptors for activated protein kinase C has also been reported. It can bind to at least three additional proteins in a Ca(2+)-independent manner; these are neurexins, syntaxin and AP2. Plays a role in dendrite formation by melanocytes. In Pongo abelii (Sumatran orangutan), this protein is Synaptotagmin-1.